A 775-amino-acid polypeptide reads, in one-letter code: tRNA(Met) cytidine acetyltransferase TmcA (775 aa).

2 disordered regions span residues 1–33 and 191–215; these read MPTTVSGPIKSVPGERRDRQVHTGASATTGMDI and TVEQDGLTDPPPSRPVPSPTPPTDA. Positions 199 to 212 are enriched in pro residues; it reads DPPPSRPVPSPTPP. Residues Gln230, 254–263, and Arg403 each bind ATP; that span reads GRGKSSAAGL. Residues 438-623 form the N-acetyltransferase domain; the sequence is VEYRQLSAAD…YSVVMLDPCS (186 aa). Acetyl-CoA contacts are provided by residues 549-551, 556-562, and Glu588; these read IAT and RSRGLGS.

It belongs to the RNA cytidine acetyltransferase family. TmcA subfamily.

The protein localises to the cytoplasm. It carries out the reaction cytidine(34) in elongator tRNA(Met) + acetyl-CoA + ATP + H2O = N(4)-acetylcytidine(34) in elongator tRNA(Met) + ADP + phosphate + CoA + H(+). Functionally, catalyzes the formation of N(4)-acetylcytidine (ac(4)C) at the wobble position of tRNA(Met), by using acetyl-CoA as an acetyl donor and ATP (or GTP). This is tRNA(Met) cytidine acetyltransferase TmcA from Haloarcula marismortui (strain ATCC 43049 / DSM 3752 / JCM 8966 / VKM B-1809) (Halobacterium marismortui).